Here is a 405-residue protein sequence, read N- to C-terminus: Interferon alpha/beta receptor 1a (405 aa).

The signal sequence occupies residues 1–20 (MKVGFALVLLWSLPITNVLA). Over 21–233 (ELPQPQNLTL…QTEGDTPYGQ (213 aa)) the chain is Extracellular. Fibronectin type-III domains are found at residues 22–123 (LPQP…IDAS) and 126–228 (PPSR…TEGD). Residues N27 and N70 are each glycosylated (N-linked (GlcNAc...) asparagine). 2 disulfides stabilise this stretch: C75–C83 and C201–C222. N-linked (GlcNAc...) asparagine glycosylation is present at N212. Residues 234–254 (IFLYFLVSMMVCFLLVLLSSY) form a helical membrane-spanning segment. At 255–405 (AFFRFYRGLK…LDEGVVDICV (151 aa)) the chain is on the cytoplasmic side. The disordered stretch occupies residues 325 to 374 (TAPPSELEQDSGRRIRQDSGDSGIYSTEGGSAQQGRSGGEPIRRDQEVDS). The span at 334 to 343 (DSGRRIRQDS) shows a compositional bias: basic and acidic residues. The span at 348–359 (IYSTEGGSAQQG) shows a compositional bias: polar residues.

The protein belongs to the type II cytokine receptor family. Heterodimer with IFNAR2; forming the receptor for type I interferon.

The protein localises to the cell membrane. Functionally, together with IFNAR2, forms the heterodimeric receptor for type I interferons (including interferons alpha, beta, epsilon, omega and kappa). Type I interferon binding activates the JAK-STAT signaling cascade, resulting in transcriptional activation or repression of interferon-regulated genes that encode the effectors of the interferon response. Mechanistically, type I interferon-binding brings the IFNAR1 and IFNAR2 subunits into close proximity with one another, driving their associated Janus kinases (JAKs) (TYK2 bound to IFNAR1 and JAK1 bound to IFNAR2) to cross-phosphorylate one another. The activated kinases phosphorylate specific tyrosine residues on the intracellular domains of IFNAR1 and IFNAR2, forming docking sites for the STAT transcription factors. STAT proteins are then phosphorylated by the JAKs, promoting their translocation into the nucleus to regulate expression of interferon-regulated genes. The polypeptide is Interferon alpha/beta receptor 1a (Oncorhynchus mykiss (Rainbow trout)).